Here is a 279-residue protein sequence, read N- to C-terminus: MGIKKFKPVTSASRYKSVLDFKEITETEPYKPLTLTLSYKAGRGDGGKISVRHKGGRVKRKYRIIDFKRRKTNVSAVVKTLEYDPNRSAFISLICYKDGEYAYILAPDGIKVGDTVQSGAGSEIKIGNAMPIGKIPPGTNVHNVELQIGRGGQIARTAGSFGTIAGRDGEYILLKLPSTEVRKVHENCYATIGICSNKDHNLVSIGKAGRSRWLGKRPTVRGVVMNPVDHPHGGGEGRTSGGRHPVSPWGQPTKGYKTRRSARPSDKFIVQKRKRNRNR.

Residues 223–279 are disordered; the sequence is VVMNPVDHPHGGGEGRTSGGRHPVSPWGQPTKGYKTRRSARPSDKFIVQKRKRNRNR. Over residues 270–279 the composition is skewed to basic residues; it reads VQKRKRNRNR.

Belongs to the universal ribosomal protein uL2 family. As to quaternary structure, part of the 50S ribosomal subunit. Forms a bridge to the 30S subunit in the 70S ribosome.

Functionally, one of the primary rRNA binding proteins. Required for association of the 30S and 50S subunits to form the 70S ribosome, for tRNA binding and peptide bond formation. It has been suggested to have peptidyltransferase activity; this is somewhat controversial. Makes several contacts with the 16S rRNA in the 70S ribosome. In Leptospira borgpetersenii serovar Hardjo-bovis (strain JB197), this protein is Large ribosomal subunit protein uL2.